We begin with the raw amino-acid sequence, 301 residues long: ATP synthase gamma chain (301 aa).

The protein belongs to the ATPase gamma chain family. F-type ATPases have 2 components, CF(1) - the catalytic core - and CF(0) - the membrane proton channel. CF(1) has five subunits: alpha(3), beta(3), gamma(1), delta(1), epsilon(1). CF(0) has three main subunits: a, b and c.

Its subcellular location is the cell inner membrane. In terms of biological role, produces ATP from ADP in the presence of a proton gradient across the membrane. The gamma chain is believed to be important in regulating ATPase activity and the flow of protons through the CF(0) complex. This is ATP synthase gamma chain from Helicobacter pylori (strain ATCC 700392 / 26695) (Campylobacter pylori).